Consider the following 137-residue polypeptide: Ribosome-binding factor A (137 aa).

The tract at residues 112–137 (KKDEVKEDESHEDESTDHTEETNEEP) is disordered. The segment covering 127 to 137 (TDHTEETNEEP) has biased composition (basic and acidic residues).

This sequence belongs to the RbfA family. Monomer. Binds 30S ribosomal subunits, but not 50S ribosomal subunits or 70S ribosomes.

It localises to the cytoplasm. In terms of biological role, one of several proteins that assist in the late maturation steps of the functional core of the 30S ribosomal subunit. Associates with free 30S ribosomal subunits (but not with 30S subunits that are part of 70S ribosomes or polysomes). Required for efficient processing of 16S rRNA. May interact with the 5'-terminal helix region of 16S rRNA. The protein is Ribosome-binding factor A of Coprothermobacter proteolyticus (strain ATCC 35245 / DSM 5265 / OCM 4 / BT).